A 160-amino-acid polypeptide reads, in one-letter code: MATVYLGLGSNVGDRISYILKAIEKLEEFLEIEKISTVYESKAWGFENQGNFLNFVLKAKTSLLPQELLLKIKKVEKEVGRKERFKWGPREIDIDILLYKDEVIRTKLLKVPHPFLEKRDFFVYPLLEIEPNVIHPIYRKPLKEFKPENTLKPFCCILKV.

It belongs to the HPPK family.

The catalysed reaction is 6-hydroxymethyl-7,8-dihydropterin + ATP = (7,8-dihydropterin-6-yl)methyl diphosphate + AMP + H(+). It participates in cofactor biosynthesis; tetrahydrofolate biosynthesis; 2-amino-4-hydroxy-6-hydroxymethyl-7,8-dihydropteridine diphosphate from 7,8-dihydroneopterin triphosphate: step 4/4. In terms of biological role, catalyzes the transfer of pyrophosphate from adenosine triphosphate (ATP) to 6-hydroxymethyl-7,8-dihydropterin, an enzymatic step in folate biosynthesis pathway. The polypeptide is 2-amino-4-hydroxy-6-hydroxymethyldihydropteridine pyrophosphokinase (folK) (Aquifex aeolicus (strain VF5)).